A 378-amino-acid chain; its full sequence is Probable pectin lyase A (378 aa).

A signal peptide spans 1-18 (MKYQGLLAIAGCIASASA). 2 disulfide bridges follow: Cys81–Cys100 and Cys90–Cys224. Residue Asn127 is glycosylated (N-linked (GlcNAc...) asparagine). Residue Arg254 is part of the active site. A disulfide bond links Cys321 and Cys329.

It belongs to the polysaccharide lyase 1 family.

The protein resides in the secreted. It carries out the reaction Eliminative cleavage of (1-&gt;4)-alpha-D-galacturonan methyl ester to give oligosaccharides with 4-deoxy-6-O-methyl-alpha-D-galact-4-enuronosyl groups at their non-reducing ends.. Its function is as follows. Pectinolytic enzymes consist of four classes of enzymes: pectin lyase, polygalacturonase, pectin methylesterase and rhamnogalacturonase. Among pectinolytic enzymes, pectin lyase is the most important in depolymerization of pectin, since it cleaves internal glycosidic bonds of highly methylated pectins. The sequence is that of Probable pectin lyase A (pelA) from Neosartorya fischeri (strain ATCC 1020 / DSM 3700 / CBS 544.65 / FGSC A1164 / JCM 1740 / NRRL 181 / WB 181) (Aspergillus fischerianus).